A 440-amino-acid chain; its full sequence is 23S rRNA (uracil(1939)-C(5))-methyltransferase RlmD (440 aa).

The disordered stretch occupies residues 1–21 (MRRRTSPRRTTTSKPQPIGPI). Residues 15–73 (PQPIGPIQTFEVDGLTHEAKGVARLQGKVTFIEGALPGETVEAQVNKAGRRFDEAVLVN) form the TRAM domain. The [4Fe-4S] cluster site is built by Cys-86, Cys-92, Cys-95, and Cys-169. 6 residues coordinate S-adenosyl-L-methionine: Gln-273, Phe-302, Asn-307, Glu-323, Asp-350, and Asp-370. Catalysis depends on Cys-396, which acts as the Nucleophile.

The protein belongs to the class I-like SAM-binding methyltransferase superfamily. RNA M5U methyltransferase family. RlmD subfamily.

It carries out the reaction uridine(1939) in 23S rRNA + S-adenosyl-L-methionine = 5-methyluridine(1939) in 23S rRNA + S-adenosyl-L-homocysteine + H(+). In terms of biological role, catalyzes the formation of 5-methyl-uridine at position 1939 (m5U1939) in 23S rRNA. The chain is 23S rRNA (uracil(1939)-C(5))-methyltransferase RlmD from Marinomonas sp. (strain MWYL1).